Reading from the N-terminus, the 128-residue chain is Pi-hexatoxin-Hi1c (128 aa).

The first 19 residues, 1 to 19 (MKLRITLALTSVLAFCVFG), serve as a signal peptide directing secretion. Positions 20–47 (DKENENLMENLLEDDLLDIFTDAIHMER) are excised as a propeptide. 6 disulfides stabilise this stretch: cysteine 54–cysteine 69, cysteine 61–cysteine 74, cysteine 68–cysteine 84, cysteine 93–cysteine 108, cysteine 100–cysteine 113, and cysteine 107–cysteine 124. Domain repeat units follow at residues 54-84 (CIAK…HEVC) and 93-124 (CLEK…HPVC). The tract at residues 54–124 (CIAKWKSCAG…ERRGNKHPVC (71 aa)) is 2 X approximate repeats with cysteine pattern C-C-CC-C-C.

The protein belongs to the psalmotoxin-1 family. Double-knot toxin subfamily. In terms of tissue distribution, expressed by the venom gland.

The protein localises to the secreted. In terms of biological role, this toxin potently and selectively inhibits ASIC1a, an isoform of the gene ASIC1. It incompletely inhibits ASIC1a activation in a pH-independent and slowly reversible manner. This toxin acts by binding to and stabilizing the closed state of the channel, thereby impeding the transition into a conducting state. This toxin may bind to the acidic pocket of ASIC1a, since mutation of a key residue of this pocket (Arg-350) abolishes the ability of the toxin to inhibit ASIC1a. In vivo, this toxin protects the brain from neuronal injury when administered up to 8 hours after stroke onset. In Hadronyche infensa (Fraser island funnel-web spider), this protein is Pi-hexatoxin-Hi1c.